Here is a 161-residue protein sequence, read N- to C-terminus: Transcription elongation factor GreA (161 aa).

Positions 43 to 68 form a coiled coil; sequence SENAEYEAAREKQAFVEARIKHLEDI.

Belongs to the GreA/GreB family.

Its function is as follows. Necessary for efficient RNA polymerase transcription elongation past template-encoded arresting sites. The arresting sites in DNA have the property of trapping a certain fraction of elongating RNA polymerases that pass through, resulting in locked ternary complexes. Cleavage of the nascent transcript by cleavage factors such as GreA or GreB allows the resumption of elongation from the new 3'terminus. GreA releases sequences of 2 to 3 nucleotides. The chain is Transcription elongation factor GreA from Rickettsia bellii (strain OSU 85-389).